The chain runs to 1260 residues: Neural cell adhesion molecule L1 (1260 aa).

The signal sequence occupies residues 1–19 (MVVMLRYVWPLLLCSPCLL). Residues 20 to 1123 (IQIPDEYKGH…VSTTGSFASE (1104 aa)) are Extracellular-facing. Ig-like C2-type domains follow at residues 35–130 (PVIT…IQLV), 138–225 (PKET…EPID), 239–327 (PRLL…YYVT), 332–419 (PYWL…AYIY), 424–506 (PARI…NNVT), and 517–600 (TQIT…DEVE). 2 disulfide bridges follow: Cys57–Cys113 and Cys157–Cys208. Asn100, Asn202, Asn246, and Asn293 each carry an N-linked (GlcNAc...) asparagine glycan. Cystine bridges form between Cys263/Cys311 and Cys353/Cys403. N-linked (GlcNAc...) asparagine glycans are attached at residues Asn432, Asn478, Asn489, and Asn504. A disulfide bond links Cys447 and Cys496. A disulfide bridge links Cys538 with Cys590. Short sequence motifs (cell attachment site) lie at residues 553-555 (RGD) and 562-564 (RGD). Asn587 and Asn670 each carry an N-linked (GlcNAc...) asparagine glycan. 5 consecutive Fibronectin type-III domains span residues 613–711 (PVPH…TPEA), 716–809 (NPVD…SGED), 811–916 (PQVS…PEGV), 919–1015 (HPEA…MALF), and 1014–1112 (LFGK…TGPV). Residues 697 to 724 (GEPSPVSESVVTPEAAPEKNPVDVRGEG) are disordered. Basic and acidic residues predominate over residues 712 to 724 (APEKNPVDVRGEG). Residues Asn725, Asn776, Asn824, Asn848, Asn875, Asn968, Asn978, Asn1022, Asn1030, Asn1073, and Asn1107 are each glycosylated (N-linked (GlcNAc...) asparagine). Residues 1124–1146 (GWFIAFVSAIILLLLILLILCFI) traverse the membrane as a helical segment. Topologically, residues 1147 to 1260 (KRSKGGKYSV…SPINPAVALE (114 aa)) are cytoplasmic. Phosphoserine is present on residues Ser1166, Ser1181, Ser1184, Ser1197, Ser1246, Ser1247, and Ser1251. Disordered regions lie at residues 1183-1210 (ESDN…SDDS) and 1229-1260 (IGQY…VALE). Over residues 1244-1253 (NDSSGATSPI) the composition is skewed to polar residues.

It belongs to the immunoglobulin superfamily. L1/neurofascin/NgCAM family. Interacts with SHTN1; the interaction occurs in axonal growth cones. Interacts with isoform 2 of BSG. As to expression, expressed in the brain, including in the molecular layer of the cerebellar cortex, the fiber-rich layers of the hippocampus (alveus, and strata lacunosum moleculare, radiatum, and oriens), the nerve fiber layer and the inner and outer plexiform layers of the retina, and in the molecular layer of the olfactory bulb (at protein level).

It localises to the cell membrane. The protein resides in the cell projection. Its subcellular location is the growth cone. Its function is as follows. Neural cell adhesion molecule involved in the dynamics of cell adhesion and in the generation of transmembrane signals at tyrosine kinase receptors. During brain development, critical in multiple processes, including neuronal migration, axonal growth and fasciculation, and synaptogenesis. In the mature brain, plays a role in the dynamics of neuronal structure and function, including synaptic plasticity. This chain is Neural cell adhesion molecule L1 (L1cam), found in Mus musculus (Mouse).